Consider the following 239-residue polypeptide: Protein GUCD1 (239 aa).

The protein is Protein GUCD1 (Gucd1) of Mus musculus (Mouse).